A 597-amino-acid polypeptide reads, in one-letter code: MPISNPRKRPICVAQSFLSKHATKAELSQAVSRLESLTQQGIRLPFDLLASLLQQCGDTKSLKQGKWIHRHLKITGFKRPNTLLSNHLIGMYMKCGKPIDACKVFDQMHLRNLYSWNNMVSGYVKSGMLVRARVVFDSMPERDVVSWNTMVIGYAQDGNLHEALWFYKEFRRSGIKFNEFSFAGLLTACVKSRQLQLNRQAHGQVLVAGFLSNVVLSCSIIDAYAKCGQMESAKRCFDEMTVKDIHIWTTLISGYAKLGDMEAAEKLFCEMPEKNPVSWTALIAGYVRQGSGNRALDLFRKMIALGVKPEQFTFSSCLCASASIASLRHGKEIHGYMIRTNVRPNAIVISSLIDMYSKSGSLEASERVFRICDDKHDCVFWNTMISALAQHGLGHKALRMLDDMIKFRVQPNRTTLVVILNACSHSGLVEEGLRWFESMTVQHGIVPDQEHYACLIDLLGRAGCFKELMRKIEEMPFEPDKHIWNAILGVCRIHGNEELGKKAADELIKLDPESSAPYILLSSIYADHGKWELVEKLRGVMKKRRVNKEKAVSWIEIEKKVEAFTVSDGSHAHARKEEIYFILHNLAAVIEEEASRT.

13 PPR repeats span residues 45–79, 81–111, 112–142, 143–177, 178–212, 213–243, 244–274, 275–309, 310–344, 345–375, 377–411, 412–447, and 448–478; these read PFDL…GFKR, NTLL…MHLR, NLYS…MPER, DVVS…GIKF, NEFS…GFLS, NVVL…MTVK, DIHI…MPEK, NPVS…GVKP, EQFT…NVRP, NAIV…CDDK, DCVF…RVQP, NRTT…GIVP, and DQEH…MPFE. Residues 483-558 are type E motif; the sequence is IWNAILGVCR…EKAVSWIEIE (76 aa). Residues 559-591 form a type E(+) motif region; it reads KKVEAFTVSDGSHAHARKEEIYFILHNLAAVIE.

Belongs to the PPR family. PCMP-E subfamily.

This chain is Pentatricopeptide repeat-containing protein At2g21090 (PCMP-E48), found in Arabidopsis thaliana (Mouse-ear cress).